The following is a 283-amino-acid chain: Bifunctional protein FolD (283 aa).

Residues 157 to 159 and Ile-224 contribute to the NADP(+) site; that span reads GNG.

This sequence belongs to the tetrahydrofolate dehydrogenase/cyclohydrolase family. In terms of assembly, homodimer.

It catalyses the reaction (6R)-5,10-methylene-5,6,7,8-tetrahydrofolate + NADP(+) = (6R)-5,10-methenyltetrahydrofolate + NADPH. It carries out the reaction (6R)-5,10-methenyltetrahydrofolate + H2O = (6R)-10-formyltetrahydrofolate + H(+). Its pathway is one-carbon metabolism; tetrahydrofolate interconversion. Catalyzes the oxidation of 5,10-methylenetetrahydrofolate to 5,10-methenyltetrahydrofolate and then the hydrolysis of 5,10-methenyltetrahydrofolate to 10-formyltetrahydrofolate. This chain is Bifunctional protein FolD, found in Mycoplasmoides gallisepticum (strain R(low / passage 15 / clone 2)) (Mycoplasma gallisepticum).